Consider the following 701-residue polypeptide: Elongation factor G (701 aa).

In terms of domain architecture, tr-type G spans 8 to 291; the sequence is GRYRNIGIVA…AVIDYLPAPT (284 aa). GTP is bound by residues 17–24, 89–93, and 143–146; these read AHVDAGKT, DTPGH, and NKMD.

It belongs to the TRAFAC class translation factor GTPase superfamily. Classic translation factor GTPase family. EF-G/EF-2 subfamily.

The protein resides in the cytoplasm. In terms of biological role, catalyzes the GTP-dependent ribosomal translocation step during translation elongation. During this step, the ribosome changes from the pre-translocational (PRE) to the post-translocational (POST) state as the newly formed A-site-bound peptidyl-tRNA and P-site-bound deacylated tRNA move to the P and E sites, respectively. Catalyzes the coordinated movement of the two tRNA molecules, the mRNA and conformational changes in the ribosome. This chain is Elongation factor G, found in Pseudomonas savastanoi pv. phaseolicola (strain 1448A / Race 6) (Pseudomonas syringae pv. phaseolicola (strain 1448A / Race 6)).